The chain runs to 337 residues: GTP 3',8-cyclase (337 aa).

Positions 17-243 constitute a Radical SAM core domain; the sequence is PFQRQYYYLR…HKSHTDGPAK (227 aa). Arg-26 is a GTP binding site. Residues Cys-33 and Cys-37 each coordinate [4Fe-4S] cluster. Tyr-39 serves as a coordination point for S-adenosyl-L-methionine. Residue Cys-40 participates in [4Fe-4S] cluster binding. Arg-76 is a binding site for GTP. Residue Gly-80 participates in S-adenosyl-L-methionine binding. Position 107 (Thr-107) interacts with GTP. Ser-131 provides a ligand contact to S-adenosyl-L-methionine. Lys-168 is a GTP binding site. Met-202 provides a ligand contact to S-adenosyl-L-methionine. Positions 265 and 268 each coordinate [4Fe-4S] cluster. 270 to 272 provides a ligand contact to GTP; sequence RLR. A [4Fe-4S] cluster-binding site is contributed by Cys-282.

It belongs to the radical SAM superfamily. MoaA family. Monomer and homodimer. [4Fe-4S] cluster is required as a cofactor.

The catalysed reaction is GTP + AH2 + S-adenosyl-L-methionine = (8S)-3',8-cyclo-7,8-dihydroguanosine 5'-triphosphate + 5'-deoxyadenosine + L-methionine + A + H(+). Its pathway is cofactor biosynthesis; molybdopterin biosynthesis. Its function is as follows. Catalyzes the cyclization of GTP to (8S)-3',8-cyclo-7,8-dihydroguanosine 5'-triphosphate. This Haemophilus influenzae (strain ATCC 51907 / DSM 11121 / KW20 / Rd) protein is GTP 3',8-cyclase.